Consider the following 317-residue polypeptide: tRNA dimethylallyltransferase (317 aa).

21 to 28 (GPTASGKS) is a binding site for ATP. 23 to 28 (TASGKS) contributes to the substrate binding site. Residues 46-49 (DSMQ) are interaction with substrate tRNA.

It belongs to the IPP transferase family. In terms of assembly, monomer. It depends on Mg(2+) as a cofactor.

The enzyme catalyses adenosine(37) in tRNA + dimethylallyl diphosphate = N(6)-dimethylallyladenosine(37) in tRNA + diphosphate. Functionally, catalyzes the transfer of a dimethylallyl group onto the adenine at position 37 in tRNAs that read codons beginning with uridine, leading to the formation of N6-(dimethylallyl)adenosine (i(6)A). The sequence is that of tRNA dimethylallyltransferase from Nitrobacter hamburgensis (strain DSM 10229 / NCIMB 13809 / X14).